Reading from the N-terminus, the 306-residue chain is Stimulator of interferon genes protein 5 (306 aa).

Residues 1-50 (MMSNDSQSEKRTAKWTGSGTPIAEGEESSSPSAHQTRQKATAADDDDDQQ) form a disordered region. Tyr-119, Arg-180, and Arg-186 together coordinate 2',3'-cGAMP.

This sequence belongs to the STING family.

Its function is as follows. Facilitator of innate immune signaling that acts as a sensor of second messenger signals produced by cyclic GMP-AMP synthase-like receptors (cGLRs) and promotes the production of type I interferon. Innate immune response is triggered in response to nucleotides from viruses and bacteria delivered to the cytoplasm. Acts by binding cyclic dinucleotides: recognizes and binds 2'-3' linked cGAMP (2'-3'-cGAMP), a second messengers produced by cGLRs in response to nucleotides in the cytosol, such as double-stranded RNA (dsRNA). Upon binding to 2'-3'-cGAMP, oligomerizes and promotes the recruitment and subsequent activation of the transcription factor IRF3 to induce expression of type I interferon. This Stylophora pistillata (Smooth cauliflower coral) protein is Stimulator of interferon genes protein 5.